The following is a 462-amino-acid chain: Sensor histidine kinase RegB (462 aa).

The Cytoplasmic segment spans residues 1-25; that stretch reads MILGPDGILNRDTRGDWWRLRTLIL. A helical membrane pass occupies residues 26–45; that stretch reads LRWMAVAGQLAAIVVTDWYL. The Extracellular portion of the chain corresponds to 46–51; that stretch reads GVRLPM. Residues 52-70 form a helical membrane-spanning segment; it reads GLCFMAVGASVIANVIATF. The Cytoplasmic portion of the chain corresponds to 71-78; that stretch reads VFPQNRRL. A helical transmembrane segment spans residues 79–96; it reads TEFQALMILLFDLTQLSF. Topologically, residues 97–103 are extracellular; it reads LLFLTGG. A helical transmembrane segment spans residues 104–123; sequence LTNPFALLILAPVTISGVAL. At 124 to 129 the chain is on the cytoplasmic side; the sequence is DVRTTV. Residues 130 to 149 traverse the membrane as a helical segment; the sequence is ILGAIAIGLLTFTAYFHLPL. The Extracellular portion of the chain corresponds to 150–164; it reads ILADGSSLSVPRMFE. A helical membrane pass occupies residues 165 to 182; it reads FGFWLAIVIGILFLGLYS. The Cytoplasmic segment spans residues 183–462; the sequence is RRVAIEIRSM…PLGENVLIQT (280 aa). A Histidine kinase domain is found at 218-445; the sequence is AAAHELGTPL…IVEVIWPVDR (228 aa). A Phosphohistidine; by autocatalysis modification is found at H221.

The protein resides in the cell inner membrane. It carries out the reaction ATP + protein L-histidine = ADP + protein N-phospho-L-histidine.. Member of the two-component regulatory system RegB/RegA. Involved in the positive regulation of photosynthesis gene expression in response to anaerobiosis. Also involved in positive regulation of the cbbI and cbbII Calvin cycle CO2 fixation operons, as well as in regulation of expression of genes involved in alternative CO2 fixation pathways. Phosphorylates RegA/PrrA. The sequence is that of Sensor histidine kinase RegB (regB) from Cereibacter sphaeroides (Rhodobacter sphaeroides).